The chain runs to 623 residues: Sterol O-acyltransferase 1 (623 aa).

Positions 20–99 are disordered; that stretch reads NSAEPSKRHS…EQAEEKYPVD (80 aa). The segment covering 57 to 72 has biased composition (low complexity); it reads ATTTATGVAVAAAAAA. Acidic residues predominate over residues 83 to 92; the sequence is DGDDEQDEQA. 5 consecutive transmembrane segments (helical) span residues 195-215, 242-262, 277-297, 384-404, and 422-442; these read LESN…WIAF, LFTI…VVFV, GFVA…PVYV, ISCS…QINY, and IMGT…PVAM. An FYXDWWN motif motif is present at residues 504-510; that stretch reads FYGDWWN. The next 2 helical transmembrane spans lie at 548–568 and 603–623; these read ATLF…FAIF and VVFT…YLTL. His-560 is an active-site residue.

Belongs to the membrane-bound acyltransferase family. Sterol o-acyltransferase subfamily.

The protein resides in the endoplasmic reticulum membrane. Sterol O-acyltransferase that catalyzes the formation of stery esters. In Saccharomyces uvarum (strain ATCC 76518 / CBS 7001 / CLIB 283 / NBRC 10550 / MCYC 623 / NCYC 2669 / NRRL Y-11845) (Yeast), this protein is Sterol O-acyltransferase 1 (ARE1).